The following is a 277-amino-acid chain: Release factor glutamine methyltransferase (277 aa).

Residues 117-121 (GTGTG), D140, W168, and N183 contribute to the S-adenosyl-L-methionine site. 183 to 186 (NPPY) lines the substrate pocket.

The protein belongs to the protein N5-glutamine methyltransferase family. PrmC subfamily.

It catalyses the reaction L-glutaminyl-[peptide chain release factor] + S-adenosyl-L-methionine = N(5)-methyl-L-glutaminyl-[peptide chain release factor] + S-adenosyl-L-homocysteine + H(+). Functionally, methylates the class 1 translation termination release factors RF1/PrfA and RF2/PrfB on the glutamine residue of the universally conserved GGQ motif. The protein is Release factor glutamine methyltransferase of Salmonella typhimurium (strain LT2 / SGSC1412 / ATCC 700720).